Reading from the N-terminus, the 110-residue chain is Thioredoxin (110 aa).

The 106-residue stretch at 3–108 (KPIEVHDSDF…YREIFDKVLA (106 aa)) folds into the Thioredoxin domain. A disulfide bridge links cysteine 32 with cysteine 35. Position 105 is an N6,N6-dimethyllysine; alternate (lysine 105). N6-methyllysine; alternate is present on lysine 105.

Participates in various redox reactions through the reversible oxidation of its active center dithiol to a disulfide and catalyzes dithiol-disulfide exchange reactions. This is Thioredoxin (trxA) from Chloroflexus aurantiacus (strain ATCC 29366 / DSM 635 / J-10-fl).